Reading from the N-terminus, the 213-residue chain is Uridine kinase (213 aa).

13–20 (GASASGKS) is an ATP binding site.

Belongs to the uridine kinase family.

It localises to the cytoplasm. It catalyses the reaction uridine + ATP = UMP + ADP + H(+). The catalysed reaction is cytidine + ATP = CMP + ADP + H(+). Its pathway is pyrimidine metabolism; CTP biosynthesis via salvage pathway; CTP from cytidine: step 1/3. It functions in the pathway pyrimidine metabolism; UMP biosynthesis via salvage pathway; UMP from uridine: step 1/1. The polypeptide is Uridine kinase (Haemophilus influenzae (strain PittGG)).